A 292-amino-acid polypeptide reads, in one-letter code: tRNA pseudouridine synthase B (292 aa).

Catalysis depends on Asp38, which acts as the Nucleophile.

The protein belongs to the pseudouridine synthase TruB family. Type 1 subfamily.

It catalyses the reaction uridine(55) in tRNA = pseudouridine(55) in tRNA. Responsible for synthesis of pseudouridine from uracil-55 in the psi GC loop of transfer RNAs. This Streptococcus sanguinis (strain SK36) protein is tRNA pseudouridine synthase B.